Consider the following 166-residue polypeptide: Small ribosomal subunit protein uS5 (166 aa).

One can recognise an S5 DRBM domain in the interval 11 to 74; it reads LQEKLIAVNR…EKARRNMINV (64 aa).

Belongs to the universal ribosomal protein uS5 family. Part of the 30S ribosomal subunit. Contacts proteins S4 and S8.

Functionally, with S4 and S12 plays an important role in translational accuracy. Its function is as follows. Located at the back of the 30S subunit body where it stabilizes the conformation of the head with respect to the body. This is Small ribosomal subunit protein uS5 from Enterobacter sp. (strain 638).